The following is a 367-amino-acid chain: Germination protease (367 aa).

The propeptide occupies 1–15; sequence MKEPLDLSKYSIRTD.

It belongs to the peptidase A25 family. Homotetramer. In terms of processing, autoproteolytically processed. The inactive tetrameric zymogen termed p46 autoprocesses to a smaller form termed p41, which is active only during spore germination.

The enzyme catalyses Endopeptidase action with P4 Glu or Asp, P1 preferably Glu &gt; Asp, P1' hydrophobic and P2' Ala.. Its function is as follows. Initiates the rapid degradation of small, acid-soluble proteins during spore germination. In Bacillus cereus (strain B4264), this protein is Germination protease.